We begin with the raw amino-acid sequence, 223 residues long: Serine/threonine/tyrosine-interacting protein A (223 aa).

The 149-residue stretch at 28-176 (EMQEILPGLF…LQEYEAIYLA (149 aa)) folds into the Tyrosine-protein phosphatase domain.

This sequence belongs to the protein-tyrosine phosphatase family. Non-receptor class subfamily.

Functionally, catalytically inactive phosphatase. The sequence is that of Serine/threonine/tyrosine-interacting protein A (styx-a) from Xenopus laevis (African clawed frog).